The sequence spans 282 residues: Bicarbonate transport ATP-binding protein CmpD (282 aa).

Positions 24–257 (LTIENVSKVY…RPRDRDRIME (234 aa)) constitute an ABC transporter domain. Position 60 to 67 (60 to 67 (GHSGCGKS)) interacts with ATP.

Belongs to the ABC transporter superfamily. Nitrate/nitrite/cyanate uptake transporter (NitT) (TC 3.A.1.16) family. As to quaternary structure, the complex is composed of two ATP-binding proteins (CmpC and CmpD), a transmembrane protein (CmpB) and a solute-binding protein (CmpA).

Its subcellular location is the cell inner membrane. Functionally, part of the ABC transporter complex CmpABCD involved in bicarbonate transport. Responsible for energy coupling to the transport system. The sequence is that of Bicarbonate transport ATP-binding protein CmpD (cmpD) from Synechocystis sp. (strain ATCC 27184 / PCC 6803 / Kazusa).